The following is a 166-amino-acid chain: MANNEQKRDEGYIEKLVQVNRVAKTVKGGRIFTFTALTVVGDGKGRVGFGRGKSREVPAAIQKAMEAARRNMIQVDLSGTTLQYPVKSAHGASRVYMQPASEGTGIIAGGAMRAVLEVAGVQNVLAKCYGSTNPVNVVYATFKGLKEMQSPESVAAKRGKSVEEIL.

The S5 DRBM domain maps to 12–75 (YIEKLVQVNR…EAARRNMIQV (64 aa)).

It belongs to the universal ribosomal protein uS5 family. In terms of assembly, part of the 30S ribosomal subunit. Contacts proteins S4 and S8.

In terms of biological role, with S4 and S12 plays an important role in translational accuracy. Functionally, located at the back of the 30S subunit body where it stabilizes the conformation of the head with respect to the body. This chain is Small ribosomal subunit protein uS5, found in Azotobacter vinelandii (strain DJ / ATCC BAA-1303).